Consider the following 927-residue polypeptide: Bifunctional glutamine synthetase adenylyltransferase/adenylyl-removing enzyme (927 aa).

The adenylyl removase stretch occupies residues 1–428 (MTMTDASDLL…AQFDQVFADK (428 aa)). Positions 438-927 (DQAAGCIWSG…AALWARVFGA (490 aa)) are adenylyl transferase.

This sequence belongs to the GlnE family. Mg(2+) is required as a cofactor.

The catalysed reaction is [glutamine synthetase]-O(4)-(5'-adenylyl)-L-tyrosine + phosphate = [glutamine synthetase]-L-tyrosine + ADP. It carries out the reaction [glutamine synthetase]-L-tyrosine + ATP = [glutamine synthetase]-O(4)-(5'-adenylyl)-L-tyrosine + diphosphate. In terms of biological role, involved in the regulation of glutamine synthetase GlnA, a key enzyme in the process to assimilate ammonia. When cellular nitrogen levels are high, the C-terminal adenylyl transferase (AT) inactivates GlnA by covalent transfer of an adenylyl group from ATP to specific tyrosine residue of GlnA, thus reducing its activity. Conversely, when nitrogen levels are low, the N-terminal adenylyl removase (AR) activates GlnA by removing the adenylyl group by phosphorolysis, increasing its activity. The regulatory region of GlnE binds the signal transduction protein PII (GlnB) which indicates the nitrogen status of the cell. The sequence is that of Bifunctional glutamine synthetase adenylyltransferase/adenylyl-removing enzyme from Burkholderia pseudomallei (strain K96243).